Consider the following 315-residue polypeptide: Ribose-phosphate pyrophosphokinase (315 aa).

ATP contacts are provided by residues 37-39 (DGE) and 96-97 (RQ). Positions 131 and 170 each coordinate Mg(2+). K194 is a catalytic residue. D-ribose 5-phosphate contacts are provided by residues R196, D220, and 224–228 (DTGGT).

This sequence belongs to the ribose-phosphate pyrophosphokinase family. Class I subfamily. Homohexamer. Mg(2+) serves as cofactor.

The protein resides in the cytoplasm. The enzyme catalyses D-ribose 5-phosphate + ATP = 5-phospho-alpha-D-ribose 1-diphosphate + AMP + H(+). It functions in the pathway metabolic intermediate biosynthesis; 5-phospho-alpha-D-ribose 1-diphosphate biosynthesis; 5-phospho-alpha-D-ribose 1-diphosphate from D-ribose 5-phosphate (route I): step 1/1. Its function is as follows. Involved in the biosynthesis of the central metabolite phospho-alpha-D-ribosyl-1-pyrophosphate (PRPP) via the transfer of pyrophosphoryl group from ATP to 1-hydroxyl of ribose-5-phosphate (Rib-5-P). In Salmonella typhi, this protein is Ribose-phosphate pyrophosphokinase.